The chain runs to 204 residues: Ras-related protein R-Ras2 (204 aa).

Alanine 2 carries the N-acetylalanine modification. 21 to 29 lines the GTP pocket; the sequence is GGGGVGKSA. Positions 43–51 match the Effector region motif; that stretch reads YDPTIEDSY. GTP contacts are provided by residues 68-72, 127-130, and 157-159; these read DTAGQ, NKAD, and SAK. A Phosphoserine modification is found at serine 186. N6-palmitoyl lysine attachment occurs at residues lysine 192, lysine 194, lysine 196, and lysine 197. Residue cysteine 199 is the site of S-palmitoyl cysteine attachment. Position 201 is a cysteine methyl ester (cysteine 201). Cysteine 201 is lipidated: S-farnesyl cysteine. Positions 202–204 are cleaved as a propeptide — removed in mature form; sequence VIF.

The protein belongs to the small GTPase superfamily. Ras family. In terms of assembly, interacts with RASSF5. May be post-translationally modified by both palmitoylation and polyisoprenylation. Post-translationally, fatty-acylation at Lys-192, Lys-194; lys-196 and Lys-197 is required for localization to the plasma membrane and activity. Defatty-acylated by SIRT6, affecting its localization to the plasma membrane. As to expression, ubiquitously present in all tissues examined, with the highest levels in heart, placenta, and skeletal muscle. Moderate levels in lung and liver; low levels in brain, kidney, and pancreas.

It is found in the cell membrane. Its subcellular location is the golgi apparatus membrane. The catalysed reaction is GTP + H2O = GDP + phosphate + H(+). GTP-binding protein with GTPase activity, involved in the regulation of MAPK signaling pathway and thereby controlling multiple cellular processes. Regulates craniofacial development. The protein is Ras-related protein R-Ras2 of Homo sapiens (Human).